The sequence spans 161 residues: Small heat shock protein ibp (161 aa).

In terms of domain architecture, sHSP spans 35 to 150 (EKPLSDTPAY…KPKKIFINIP (116 aa)).

This sequence belongs to the small heat shock protein (HSP20) family.

The protein is Small heat shock protein ibp (ibp) of Buchnera aphidicola subsp. Schizaphis graminum (strain Sg).